Here is a 170-residue protein sequence, read N- to C-terminus: uncharacterized protein (170 aa).

A run of 5 helical transmembrane segments spans residues 21-41 (NISL…AAVL), 55-75 (AYTS…TLLL), 86-106 (TGIA…YWLW), 117-137 (ISGV…VSLL), and 143-163 (FSAA…TLLP). Residues 35-161 (IIFAAVLRWT…IMLATLGSTL (127 aa)) form the EamA domain.

The protein belongs to the EamA transporter family.

The protein resides in the cell membrane. This is an uncharacterized protein from Haemophilus influenzae (strain ATCC 51907 / DSM 11121 / KW20 / Rd).